A 265-amino-acid chain; its full sequence is 3-methyl-2-oxobutanoate hydroxymethyltransferase (265 aa).

Positions 43 and 82 each coordinate Mg(2+). 3-methyl-2-oxobutanoate-binding positions include 43 to 44, Asp82, and Lys111; that span reads DS. Residue Glu113 coordinates Mg(2+). Glu180 (proton acceptor) is an active-site residue.

This sequence belongs to the PanB family. Homodecamer; pentamer of dimers. Requires Mg(2+) as cofactor.

The protein localises to the cytoplasm. The enzyme catalyses 3-methyl-2-oxobutanoate + (6R)-5,10-methylene-5,6,7,8-tetrahydrofolate + H2O = 2-dehydropantoate + (6S)-5,6,7,8-tetrahydrofolate. Its pathway is cofactor biosynthesis; (R)-pantothenate biosynthesis; (R)-pantoate from 3-methyl-2-oxobutanoate: step 1/2. In terms of biological role, catalyzes the reversible reaction in which hydroxymethyl group from 5,10-methylenetetrahydrofolate is transferred onto alpha-ketoisovalerate to form ketopantoate. The sequence is that of 3-methyl-2-oxobutanoate hydroxymethyltransferase from Francisella tularensis subsp. novicida (strain U112).